The sequence spans 545 residues: CTP synthase (545 aa).

The amidoligase domain stretch occupies residues 1-266 (MTTRYIFVTG…DDLVTKRFGL (266 aa)). S14 contacts CTP. S14 contributes to the UTP binding site. Residues 15–20 (SLGKGI) and D72 each bind ATP. Residues D72 and E140 each contribute to the Mg(2+) site. CTP contacts are provided by residues 147–149 (DIE), 187–192 (KTKPTQ), and K223. Residues 187–192 (KTKPTQ) and K223 each bind UTP. Position 239–241 (239–241 (KDV)) interacts with ATP. Residues 291 to 542 (TIGMVGKYTE…VAAAVAYQKR (252 aa)) form the Glutamine amidotransferase type-1 domain. G352 serves as a coordination point for L-glutamine. Catalysis depends on C379, which acts as the Nucleophile; for glutamine hydrolysis. L-glutamine contacts are provided by residues 380–383 (LGMQ), E403, and R470. Residues H515 and E517 contribute to the active site.

This sequence belongs to the CTP synthase family. As to quaternary structure, homotetramer.

It carries out the reaction UTP + L-glutamine + ATP + H2O = CTP + L-glutamate + ADP + phosphate + 2 H(+). The enzyme catalyses L-glutamine + H2O = L-glutamate + NH4(+). The catalysed reaction is UTP + NH4(+) + ATP = CTP + ADP + phosphate + 2 H(+). The protein operates within pyrimidine metabolism; CTP biosynthesis via de novo pathway; CTP from UDP: step 2/2. Its activity is regulated as follows. Allosterically activated by GTP, when glutamine is the substrate; GTP has no effect on the reaction when ammonia is the substrate. The allosteric effector GTP functions by stabilizing the protein conformation that binds the tetrahedral intermediate(s) formed during glutamine hydrolysis. Inhibited by the product CTP, via allosteric rather than competitive inhibition. Functionally, catalyzes the ATP-dependent amination of UTP to CTP with either L-glutamine or ammonia as the source of nitrogen. Regulates intracellular CTP levels through interactions with the four ribonucleotide triphosphates. The chain is CTP synthase from Shewanella loihica (strain ATCC BAA-1088 / PV-4).